The following is a 392-amino-acid chain: Succinyl-diaminopimelate desuccinylase (392 aa).

Position 71 (His-71) interacts with Zn(2+). Residue Asp-73 is part of the active site. Asp-102 is a Zn(2+) binding site. The Proton acceptor role is filled by Glu-144. Zn(2+)-binding residues include Glu-145, Glu-173, and His-362.

Belongs to the peptidase M20A family. DapE subfamily. As to quaternary structure, homodimer. Zn(2+) serves as cofactor. The cofactor is Co(2+).

The enzyme catalyses N-succinyl-(2S,6S)-2,6-diaminopimelate + H2O = (2S,6S)-2,6-diaminopimelate + succinate. It participates in amino-acid biosynthesis; L-lysine biosynthesis via DAP pathway; LL-2,6-diaminopimelate from (S)-tetrahydrodipicolinate (succinylase route): step 3/3. Catalyzes the hydrolysis of N-succinyl-L,L-diaminopimelic acid (SDAP), forming succinate and LL-2,6-diaminopimelate (DAP), an intermediate involved in the bacterial biosynthesis of lysine and meso-diaminopimelic acid, an essential component of bacterial cell walls. The polypeptide is Succinyl-diaminopimelate desuccinylase (Rhodospirillum rubrum (strain ATCC 11170 / ATH 1.1.1 / DSM 467 / LMG 4362 / NCIMB 8255 / S1)).